We begin with the raw amino-acid sequence, 89 residues long: Small ribosomal subunit protein uS15 (89 aa).

The protein belongs to the universal ribosomal protein uS15 family. As to quaternary structure, part of the 30S ribosomal subunit. Forms a bridge to the 50S subunit in the 70S ribosome, contacting the 23S rRNA.

Functionally, one of the primary rRNA binding proteins, it binds directly to 16S rRNA where it helps nucleate assembly of the platform of the 30S subunit by binding and bridging several RNA helices of the 16S rRNA. In terms of biological role, forms an intersubunit bridge (bridge B4) with the 23S rRNA of the 50S subunit in the ribosome. The protein is Small ribosomal subunit protein uS15 of Pectobacterium atrosepticum (strain SCRI 1043 / ATCC BAA-672) (Erwinia carotovora subsp. atroseptica).